Consider the following 489-residue polypeptide: Putative BTB/POZ domain-containing protein R773 (489 aa).

The BTB domain occupies 3-73 (SNIELVITDE…GNTSYKFQDK (71 aa)).

It belongs to the mimivirus BTB/WD family.

The polypeptide is Putative BTB/POZ domain-containing protein R773 (Acanthamoeba polyphaga (Amoeba)).